We begin with the raw amino-acid sequence, 259 residues long: UPF0246 protein PST_1170 (259 aa).

The protein belongs to the UPF0246 family.

The sequence is that of UPF0246 protein PST_1170 from Stutzerimonas stutzeri (strain A1501) (Pseudomonas stutzeri).